Consider the following 1157-residue polypeptide: Endo-1,4-beta-xylanase A (1157 aa).

An N-terminal signal peptide occupies residues 1 to 33 (MMKNNVDRIVSIVTALIMIFGASLFSPPIRVFA). 2 CBM-cenC domains span residues 38-189 (INLV…VTTQ) and 195-343 (GNVI…VIGE). The GH10 domain occupies 352-675 (QNDIPDLYSV…KPAFWAVVDP (324 aa)). E495 (proton donor) is an active-site residue. The active site involves D537. Residue E600 is the Nucleophile of the active site. 2 SLH domains span residues 1051–1114 (KKGV…YSGE) and 1115–1157 (FSDV…EMTQ).

Belongs to the glycosyl hydrolase 10 (cellulase F) family.

The catalysed reaction is Endohydrolysis of (1-&gt;4)-beta-D-xylosidic linkages in xylans.. The protein operates within glycan degradation; xylan degradation. In terms of biological role, endo-acting enzyme that randomly cleaves the internal xylosidic linkages of the xylan backbone, yielding xylooligosaccharides of various lengths which are further hydrolyzed to xylose molecules by beta-xylosidase (EC 3.2.1.37). Requires at least three xylose residues for catalytic activity. Does not have activity against xylobiose. This chain is Endo-1,4-beta-xylanase A (xynA), found in Thermoanaerobacterium saccharolyticum.